The primary structure comprises 73 residues: Putative membrane protein insertion efficiency factor (73 aa).

The protein belongs to the UPF0161 family.

It localises to the cell inner membrane. Its function is as follows. Could be involved in insertion of integral membrane proteins into the membrane. In Jannaschia sp. (strain CCS1), this protein is Putative membrane protein insertion efficiency factor.